A 290-amino-acid polypeptide reads, in one-letter code: tRNA dimethylallyltransferase (290 aa).

9–16 (GPTASGKT) contributes to the ATP binding site. Residue 11 to 16 (TASGKT) coordinates substrate. The tract at residues 34–37 (DSTQ) is interaction with substrate tRNA.

The protein belongs to the IPP transferase family. In terms of assembly, monomer. Mg(2+) is required as a cofactor.

It catalyses the reaction adenosine(37) in tRNA + dimethylallyl diphosphate = N(6)-dimethylallyladenosine(37) in tRNA + diphosphate. Catalyzes the transfer of a dimethylallyl group onto the adenine at position 37 in tRNAs that read codons beginning with uridine, leading to the formation of N6-(dimethylallyl)adenosine (i(6)A). The sequence is that of tRNA dimethylallyltransferase from Phytoplasma australiense.